The chain runs to 138 residues: MRTLWIMAVLLVGVEGSVIELGKMILQETGKNPVTYYSAYGCNCGPLGRRKPLDATDRCCFMHKCCYKKLTDSNPIKDSYSYSWENKAIVCKEKNPRLKEMCECDKAVAICFRENMGTYNKKERINTKIFCKKTSEPC.

A signal peptide spans 1–16 (MRTLWIMAVLLVGVEG). 6 disulfide bridges follow: Cys-42–Cys-131, Cys-44–Cys-60, Cys-59–Cys-111, Cys-65–Cys-138, Cys-66–Cys-104, and Cys-91–Cys-102. The interval 121-133 (KKERINTKIFCKK) is important for membrane-damaging activities in eukaryotes and bacteria; heparin-binding.

As to quaternary structure, monomer. In terms of tissue distribution, expressed by the venom gland.

The protein localises to the secreted. Its function is as follows. Snake venom phospholipase A2 homolog that lacks catalytic activity. It induces local edema. Is myotoxic. A model of myotoxic mechanism has been proposed: an apo Lys49-PLA2 is activated by the entrance of a hydrophobic molecule (e.g. fatty acid) at the hydrophobic channel of the protein leading to a reorientation of a monomer. This reorientation causes a transition between 'inactive' to 'active' states, causing alignment of C-terminal and membrane-docking sites (MDoS) side-by-side and putting the membrane-disruption sites (MDiS) in the same plane, exposed to solvent and in a symmetric position for both monomers. The MDoS region stabilizes the toxin on membrane by the interaction of charged residues with phospholipid head groups. Subsequently, the MDiS region destabilizes the membrane with penetration of hydrophobic residues. This insertion causes a disorganization of the membrane, allowing an uncontrolled influx of ions (i.e. calcium and sodium), and eventually triggering irreversible intracellular alterations and cell death. The protein is Basic phospholipase A2 homolog Tbo-K49 of Craspedocephalus borneensis (Borneo pit viper).